We begin with the raw amino-acid sequence, 553 residues long: MSVDENQLENGQLLSSENEASSPFKESIPSRSSLYLIALTVSLLGVQLTWSVELGYGTPYLFSLGLRKEWTSIIWIAGPLTGILIQPIAGILSDRVNSRIGRRRPFMLCASLLGTFSLFLMGWAPDICLFIFSNEVLMKRVTIVLATISIYLLDVAVNVVMASTRSLIVDSVRSDQQHEANSWAGRMIGVGNVLGYLLGYLPLYRIFSFLNFTQLQVFCVLASISLVLTVTITTIFVSERRFPPVEHEKSVAGEIFEFFTTMRQSITALPFTLKRICFVQFFAYFGWFPFLFYITTYVGILYLRHAPKGHEEDWDMATRQGSFALLLFAIISLAANTALPLLLEDTEDDEEDESSDASNNEYNIQERNDLGNIRTGTNTPRLGNLSETTSFRSENEPSRRRLLPSSRSIMTTISSKVQIKGLTLPILWLSSHVLFGVCMLSTIFLQTSWQAQAMVAICGLSWACTLWIPYSLFSSEIGKLGLRESSGKMIGVHNVFISAPQVLSTIIATIVFIQSEGSHRDIADNSIAWVLRIGGISAFLAAYQCRHLLPINF.

A compositionally biased stretch (polar residues) spans 1–21 (MSVDENQLENGQLLSSENEAS). The disordered stretch occupies residues 1–26 (MSVDENQLENGQLLSSENEASSPFKE). Over 1-33 (MSVDENQLENGQLLSSENEASSPFKESIPSRSS) the chain is Cytoplasmic. The helical transmembrane segment at 34 to 54 (LYLIALTVSLLGVQLTWSVEL) threads the bilayer. Residues 55–72 (GYGTPYLFSLGLRKEWTS) lie on the Extracellular side of the membrane. Residues 73-93 (IIWIAGPLTGILIQPIAGILS) traverse the membrane as a helical segment. Over 94-111 (DRVNSRIGRRRPFMLCAS) the chain is Cytoplasmic. The helical transmembrane segment at 112–132 (LLGTFSLFLMGWAPDICLFIF) threads the bilayer. At 133 to 140 (SNEVLMKR) the chain is on the extracellular side. The chain crosses the membrane as a helical span at residues 141–161 (VTIVLATISIYLLDVAVNVVM). Topologically, residues 162–186 (ASTRSLIVDSVRSDQQHEANSWAGR) are cytoplasmic. Residues 187–207 (MIGVGNVLGYLLGYLPLYRIF) traverse the membrane as a helical segment. Topologically, residues 208-216 (SFLNFTQLQ) are extracellular. A helical membrane pass occupies residues 217 to 237 (VFCVLASISLVLTVTITTIFV). Topologically, residues 238-280 (SERRFPPVEHEKSVAGEIFEFFTTMRQSITALPFTLKRICFVQ) are cytoplasmic. A helical transmembrane segment spans residues 281-301 (FFAYFGWFPFLFYITTYVGIL). Residues 302–322 (YLRHAPKGHEEDWDMATRQGS) lie on the Extracellular side of the membrane. Residues 323–343 (FALLLFAIISLAANTALPLLL) traverse the membrane as a helical segment. The Cytoplasmic portion of the chain corresponds to 344 to 424 (EDTEDDEEDE…SKVQIKGLTL (81 aa)). A disordered region spans residues 368-399 (NDLGNIRTGTNTPRLGNLSETTSFRSENEPSR). Residues 374 to 392 (RTGTNTPRLGNLSETTSFR) show a composition bias toward polar residues. A helical transmembrane segment spans residues 425-445 (PILWLSSHVLFGVCMLSTIFL). The Extracellular segment spans residues 446–452 (QTSWQAQ). Residues 453–473 (AMVAICGLSWACTLWIPYSLF) form a helical membrane-spanning segment. At 474 to 494 (SSEIGKLGLRESSGKMIGVHN) the chain is on the cytoplasmic side. The chain crosses the membrane as a helical span at residues 495-515 (VFISAPQVLSTIIATIVFIQS). Residues 516–521 (EGSHRD) are Extracellular-facing. The chain crosses the membrane as a helical span at residues 522–542 (IADNSIAWVLRIGGISAFLAA). Residues 543-553 (YQCRHLLPINF) lie on the Cytoplasmic side of the membrane.

It belongs to the glycoside-pentoside-hexuronide (GPH) cation symporter transporter (TC 2.A.2.4) family.

The protein resides in the membrane. Its function is as follows. Responsible for the transport of maltose and sucrose into the cell, with the concomitant uptake of protons (symport system). This Schizosaccharomyces pombe (strain 972 / ATCC 24843) (Fission yeast) protein is General alpha-glucoside permease (sut1).